The primary structure comprises 156 residues: Rhombotin-1 (156 aa).

2 consecutive LIM zinc-binding domains span residues 22 to 84 and 86 to 148; these read KGCA…LFGT and GNCA…GQLN.

It is found in the nucleus. May be involved in gene regulation within neural lineage cells potentially by direct DNA binding or by binding to other transcription factors. In Xenopus laevis (African clawed frog), this protein is Rhombotin-1.